A 41-amino-acid polypeptide reads, in one-letter code: Phospholipase A2 homolog nigroviriditoxin acidic subunit A (41 aa).

It belongs to the phospholipase A2 family. Group II subfamily. D49 sub-subfamily. As to quaternary structure, nigroviriditoxin is a heterodimer of an acidic subunit A and a basic subunit B. In terms of tissue distribution, expressed by the venom gland.

The protein localises to the secreted. In terms of biological role, heterodimer A-B: Nigroviriditoxin possesses phospholipase A2 (PLA2) activity. It consists of a non-covalent association of a basic PLA2 subunit B with a non-enzymatic subunit A. Its function is as follows. Subunit A: The acidic subunit of nigroviriditoxin probably is a heterotrimer of three disulfide-linked chains generated by post-translational maturation of a PLA2-like precursor. It appears to have no PLA2 activity of its own, instead inhibiting the catalytic activity of subunit B. It is not toxic to mice by itself but increases toxicity of subunit B. This chain is Phospholipase A2 homolog nigroviriditoxin acidic subunit A, found in Bothriechis nigroviridis (Black-speckled palm pit viper).